The following is a 279-amino-acid chain: Tryptophan synthase alpha chain (279 aa).

Catalysis depends on proton acceptor residues Glu50 and Asp61.

It belongs to the TrpA family. As to quaternary structure, tetramer of two alpha and two beta chains.

It carries out the reaction (1S,2R)-1-C-(indol-3-yl)glycerol 3-phosphate + L-serine = D-glyceraldehyde 3-phosphate + L-tryptophan + H2O. It functions in the pathway amino-acid biosynthesis; L-tryptophan biosynthesis; L-tryptophan from chorismate: step 5/5. The alpha subunit is responsible for the aldol cleavage of indoleglycerol phosphate to indole and glyceraldehyde 3-phosphate. The protein is Tryptophan synthase alpha chain of Brucella anthropi (strain ATCC 49188 / DSM 6882 / CCUG 24695 / JCM 21032 / LMG 3331 / NBRC 15819 / NCTC 12168 / Alc 37) (Ochrobactrum anthropi).